Reading from the N-terminus, the 279-residue chain is Thermitase (279 aa).

A Ca(2+)-binding site is contributed by aspartate 5. The Peptidase S8 domain occupies 12-277; that stretch reads QYGPQKIQAP…KGRVNAYKAV (266 aa). Aspartate 38 (charge relay system) is an active-site residue. Residues aspartate 47, aspartate 57, aspartate 60, aspartate 62, threonine 64, and glutamine 66 each coordinate Ca(2+). The Charge relay system role is filled by histidine 71. Residues valine 82, asparagine 85, threonine 87, and isoleucine 89 each coordinate Ca(2+). Na(+) is bound by residues alanine 173, tyrosine 175, and alanine 178. Positions 199 and 201 each coordinate Ca(2+). Aspartate 201 is a binding site for Na(+). Residue serine 225 is the Charge relay system of the active site.

The protein belongs to the peptidase S8 family. Ca(2+) is required as a cofactor. It depends on Na(+) as a cofactor.

It localises to the secreted. The enzyme catalyses Hydrolysis of proteins, including collagen.. In Thermoactinomyces vulgaris, this protein is Thermitase.